The sequence spans 494 residues: Probable cytosol aminopeptidase (494 aa).

2 residues coordinate Mn(2+): Lys260 and Asp265. Lys272 is an active-site residue. Residues Asp283, Asp342, and Glu344 each coordinate Mn(2+). The active site involves Arg346.

This sequence belongs to the peptidase M17 family. Mn(2+) serves as cofactor.

Its subcellular location is the cytoplasm. The enzyme catalyses Release of an N-terminal amino acid, Xaa-|-Yaa-, in which Xaa is preferably Leu, but may be other amino acids including Pro although not Arg or Lys, and Yaa may be Pro. Amino acid amides and methyl esters are also readily hydrolyzed, but rates on arylamides are exceedingly low.. The catalysed reaction is Release of an N-terminal amino acid, preferentially leucine, but not glutamic or aspartic acids.. In terms of biological role, presumably involved in the processing and regular turnover of intracellular proteins. Catalyzes the removal of unsubstituted N-terminal amino acids from various peptides. This chain is Probable cytosol aminopeptidase, found in Bacillus cereus (strain ATCC 10987 / NRS 248).